Here is an 84-residue protein sequence, read N- to C-terminus: Large ribosomal subunit protein bL27 (84 aa).

The disordered stretch occupies residues 1–22 (MAHKKAGGSTRNGRDSESKRLG).

It belongs to the bacterial ribosomal protein bL27 family.

The protein is Large ribosomal subunit protein bL27 of Shewanella baltica (strain OS223).